A 64-amino-acid polypeptide reads, in one-letter code: MVKECTLTGKKSNNGYTVSHSHIRTKKIQHINLQTKKIWSDKQKRWIKIKICTKAIKSLHKLKV.

Belongs to the bacterial ribosomal protein bL28 family.

The protein localises to the plastid. It localises to the chloroplast. The chain is Large ribosomal subunit protein bL28c from Gracilaria tenuistipitata var. liui (Red alga).